Reading from the N-terminus, the 237-residue chain is MAGHNKWSKVKHIKAKEDAKKGKVFTKAVRDIMTAVRDGGPNPDTNAALRLAIERAKAVSMPQDNIKRAIDKASGNLPGVKYEEITYEGYGPGGVAIMVECLTDNKNRTVASVRHAFSKSGGSLGTSGSVSWMFEKKGVITVERDENEDAIMEAALESGANDILEFDEVLVIETDPADFNQVLEAVEKAGAKILESSVGLVATNEIDVDDATAEKVERLIDMLEENDDVQNVYHNMK.

The protein belongs to the TACO1 family.

Its subcellular location is the cytoplasm. The sequence is that of Probable transcriptional regulatory protein NIS_0560 from Nitratiruptor sp. (strain SB155-2).